The sequence spans 859 residues: Envelope glycoprotein gp160 (859 aa).

Residues 1-24 (MCGRNQLFVASLLASACLIYCVQY) form the signal peptide. At 25-673 (VTVFYGVPVW…LTSWIKYIQY (649 aa)) the chain is on the extracellular side. The N-linked (GlcNAc...) asparagine; by host glycan is linked to Asn36. A disulfide bond links Cys43 and Cys56. N-linked (GlcNAc...) asparagine; by host glycans are attached at residues Asn69, Asn78, Asn113, Asn119, Asn131, Asn137, Asn145, Asn160, Asn173, Asn186, Asn200, Asn232, Asn235, Asn242, Asn266, Asn272, Asn283, Asn294, Asn304, Asn359, Asn392, Asn402, Asn405, Asn442, Asn457, and Asn460. 5 cysteine pairs are disulfide-bonded: Cys100–Cys208, Cys107–Cys199, Cys112–Cys157, Cys221–Cys251, and Cys231–Cys243. The tract at residues 112 to 156 (CNSTTAKNTTSTPTTTTTANTTIGENSSCIRTDNCTGLGEEEMVD) is V1. Positions 157 to 199 (CQFNMTGLERDKKKLYNETWYSKDVVCESNDTKKEKTCYMNHC) are V2. Positions 299-331 (CKRPGNKTVVPITLMSGLVFHSQPINRRPRQAW) are V3. Cys299 and Cys332 form a disulfide bridge. 2 cysteine pairs are disulfide-bonded: Cys384–Cys441 and Cys391–Cys414. Residues 391–414 (CNMTWFLNWVENRTNQTQHNYVPC) form a V4 region. A V5 region spans residues 457–463 (NQTNITF). The fusion peptide stretch occupies residues 506-526 (GVFVLGFLGFLTTAGAAMGAA). The segment at 569 to 585 (LQARVTAIEKYLKDQAQ) is immunosuppression. Asn605, Asn614, and Asn630 each carry an N-linked (GlcNAc...) asparagine; by host glycan. The stretch at 614–646 (NMTWQEWEQRIRNLEANISESLEQAQIQQEKNM) forms a coiled coil. Residues 651-672 (KLNSWDVFGNWFDLTSWIKYIQ) form an MPER; binding to GalCer region. Residues 674-694 (GVYIVVGIIVLRIVIYVVQML) traverse the membrane as a helical segment. Topologically, residues 695–859 (SRLRKGYRPV…IRQGAEIALL (165 aa)) are cytoplasmic. The short motif at 701–704 (YRPV) is the YXXV motif; contains endocytosis signal element. A lipid anchor (S-palmitoyl cysteine; by host) is attached at Cys767. Residues 858 to 859 (LL) carry the Di-leucine internalization motif motif.

In terms of assembly, the mature envelope protein (Env) consists of a homotrimer of non-covalently associated gp120-gp41 heterodimers. The resulting complex protrudes from the virus surface as a spike. There seems to be as few as 10 spikes on the average virion. Interacts with human CD4, CCR5 and CXCR4, to form a P4HB/PDI-CD4-CXCR4-gp120 complex. Gp120 also interacts with the C-type lectins CD209/DC-SIGN and CLEC4M/DC-SIGNR (collectively referred to as DC-SIGN(R)). Gp120 and gp41 interact with GalCer. The mature envelope protein (Env) consists of a homotrimer of non-covalently associated gp120-gp41 heterodimers. The resulting complex protrudes from the virus surface as a spike. There seems to be as few as 10 spikes on the average virion. Specific enzymatic cleavages in vivo yield mature proteins. Envelope glycoproteins are synthesized as an inactive precursor that is heavily N-glycosylated and processed likely by host cell furin in the Golgi to yield the mature SU and TM proteins. The cleavage site between SU and TM requires the minimal sequence [KR]-X-[KR]-R. In terms of processing, palmitoylation of the transmembrane protein and of Env polyprotein (prior to its proteolytic cleavage) is essential for their association with host cell membrane lipid rafts. Palmitoylation is therefore required for envelope trafficking to classical lipid rafts, but not for viral replication.

The protein resides in the virion membrane. The protein localises to the host cell membrane. Its subcellular location is the host endosome membrane. In terms of biological role, the surface protein gp120 (SU) attaches the virus to the host lymphoid cell by binding to the primary receptor CD4. This interaction induces a structural rearrangement creating a high affinity binding site for a chemokine coreceptor like CXCR4 and/or CCR5. This peculiar 2 stage receptor-interaction strategy allows gp120 to maintain the highly conserved coreceptor-binding site in a cryptic conformation, protected from neutralizing antibodies. Since CD4 also displays a binding site for the disulfide-isomerase P4HB/PDI, a P4HB/PDI-CD4-CXCR4-gp120 complex may form. In that complex, P4HB/PDI could reach and reduce gp120 disulfide bonds, causing major conformational changes in gp120. TXN, another PDI family member could also be involved in disulfide rearrangements in Env during fusion. These changes are transmitted to the transmembrane protein gp41 and are thought to activate its fusogenic potential by unmasking its fusion peptide. The surface protein gp120 is a ligand for CD209/DC-SIGN and CLEC4M/DC-SIGNR, which are respectively found on dendritic cells (DCs), and on endothelial cells of liver sinusoids and lymph node sinuses. These interactions allow capture of viral particles at mucosal surfaces by these cells and subsequent transmission to permissive cells. DCs are professional antigen presenting cells, critical for host immunity by inducing specific immune responses against a broad variety of pathogens. They act as sentinels in various tissues where they take up antigen, process it, and present it to T-cells following migration to lymphoid organs. HIV subverts the migration properties of dendritic cells to gain access to CD4+ T-cells in lymph nodes. Virus transmission to permissive T-cells occurs either in trans (without DCs infection, through viral capture and transmission), or in cis (following DCs productive infection, through the usual CD4-gp120 interaction), thereby inducing a robust infection. In trans infection, bound virions remain infectious over days and it is proposed that they are not degraded, but protected in non-lysosomal acidic organelles within the DCs close to the cell membrane thus contributing to the viral infectious potential during DCs' migration from the periphery to the lymphoid tissues. On arrival at lymphoid tissues, intact virions recycle back to DCs' cell surface allowing virus transmission to CD4+ T-cells. Virion capture also seems to lead to MHC-II-restricted viral antigen presentation, and probably to the activation of HIV-specific CD4+ cells. Functionally, the transmembrane protein gp41 (TM) acts as a class I viral fusion protein. Under the current model, the protein has at least 3 conformational states: pre-fusion native state, pre-hairpin intermediate state, and post-fusion hairpin state. During fusion of viral and target intracellular membranes, the coiled coil regions (heptad repeats) assume a trimer-of-hairpins structure, positioning the fusion peptide in close proximity to the C-terminal region of the ectodomain. The formation of this structure appears to drive apposition and subsequent fusion of viral and target cell membranes. Complete fusion occurs in host cell endosomes and is dynamin-dependent, however some lipid transfer might occur at the plasma membrane. The virus undergoes clathrin-dependent internalization long before endosomal fusion, thus minimizing the surface exposure of conserved viral epitopes during fusion and reducing the efficacy of inhibitors targeting these epitopes. Membranes fusion leads to delivery of the nucleocapsid into the cytoplasm. Its function is as follows. The envelope glycoprotein gp160 precursor down-modulates cell surface CD4 antigen by interacting with it in the endoplasmic reticulum and blocking its transport to the cell surface. In terms of biological role, the gp120-gp41 heterodimer seems to contribute to T-cell depletion during HIV-1 infection. The envelope glycoproteins expressed on the surface of infected cells induce apoptosis through an interaction with uninfected cells expressing the receptor (CD4) and the coreceptors CXCR4 or CCR5. This type of bystander killing may be obtained by at least three distinct mechanisms. First, the interaction between the 2 cells can induce cellular fusion followed by nuclear fusion within the syncytium. Syncytia are condemned to die from apoptosis. Second, the 2 interacting cells may not fuse entirely and simply exchange plasma membrane lipids, after a sort of hemifusion process, followed by rapid death. Third, it is possible that virus-infected cells, on the point of undergoing apoptosis, fuse with CD4-expressing cells, in which case apoptosis is rapidly transmitted from one cell to the other and thus occurs in a sort of contagious fashion. The gp120-gp41 heterodimer allows rapid transcytosis of the virus through CD4 negative cells such as simple epithelial monolayers of the intestinal, rectal and endocervical epithelial barriers. Both gp120 and gp41 specifically recognize glycosphingolipids galactosyl-ceramide (GalCer) or 3' sulfo-galactosyl-ceramide (GalS) present in the lipid rafts structures of epithelial cells. Binding to these alternative receptors allows the rapid transcytosis of the virus through the epithelial cells. This transcytotic vesicle-mediated transport of virions from the apical side to the basolateral side of the epithelial cells does not involve infection of the cells themselves. The protein is Envelope glycoprotein gp160 (env) of Homo sapiens (Human).